The chain runs to 574 residues: E3 ubiquitin-protein ligase TRIM23 (574 aa).

Residues 31-76 form an RING-type; degenerate zinc finger; sequence CGVCEDVFSLQGDKVPRLLLCGHTVCHDCLTRLPLHGRAIRCPFDR. The B box-type; degenerate zinc finger occupies 122–168; the sequence is ESIIRCDEDEAHLASVYCTVCATHLCSECSQVTHSTKTLAKHRRVPL. Residues 352-379 adopt a coiled-coil conformation; sequence RVVLAKQEITRLLETLQKQQQQFTEVAD. The ARF-like stretch occupies residues 390 to 574; sequence TFTKDNRVHI…LVAAGVLDVA (185 aa). GTP is bound by residues 411–418, 454–458, and 513–516; these read GLDGAGKT, DVGGK, and NKQD.

This sequence in the C-terminal section; belongs to the small GTPase superfamily. Arf family. Homodimer. Interacts with PSCD1. Interacts with UBE2D2. Interacts with TBK1 (via N-terminal kinase domain) and p62/SQSTM1. In terms of assembly, (Microbial infection) Interacts with human cytomegalovirus protein UL144; this interaction might cause autoubiquitination of TRAF6, leading to NF-kappa-B activation.

It is found in the cytoplasm. The protein localises to the endomembrane system. It localises to the golgi apparatus membrane. The protein resides in the lysosome membrane. The enzyme catalyses S-ubiquitinyl-[E2 ubiquitin-conjugating enzyme]-L-cysteine + [acceptor protein]-L-lysine = [E2 ubiquitin-conjugating enzyme]-L-cysteine + N(6)-ubiquitinyl-[acceptor protein]-L-lysine.. It functions in the pathway protein modification; protein ubiquitination. Its function is as follows. Acts as an E3 ubiquitin-protein ligase. Plays an essential role in autophagy activation during viral infection. Mechanistically, activates TANK-binding kinase 1/TBK1 by facilitating its dimerization and ability to phosphorylate the selective autophagy receptor SQSTM1. In order to achieve this function, TRIM23 mediates 'Lys-27'-linked auto-ubiquitination of its ADP-ribosylation factor (ARF) domain to induce its GTPase activity and its recruitment to autophagosomes. (Microbial infection) Mediates TRAF6 auto-ubiquitination in the presence of human cytomegalovirus protein UL144, resulting in the virally controlled activation of NF-kappa-B stimulation at early times of HCMV infection. The polypeptide is E3 ubiquitin-protein ligase TRIM23 (TRIM23) (Homo sapiens (Human)).